The chain runs to 738 residues: Catalase-peroxidase (738 aa).

Residues 1 to 24 are disordered; the sequence is MSEEHPPIAEANSQPSNGCPVAGG. Residues 108-231 constitute a cross-link (tryptophyl-tyrosyl-methioninium (Trp-Tyr) (with M-257)); the sequence is WHAAGTYRVG…LAAVQMGLIY (124 aa). The Proton acceptor role is filled by histidine 109. Residues 231–257 constitute a cross-link (tryptophyl-tyrosyl-methioninium (Tyr-Met) (with W-108)); the sequence is YVNPEGPNGNPDPLAAAIDIRETFGRM. Position 272 (histidine 272) interacts with heme b.

Belongs to the peroxidase family. Peroxidase/catalase subfamily. As to quaternary structure, homodimer or homotetramer. Heme b is required as a cofactor. Formation of the three residue Trp-Tyr-Met cross-link is important for the catalase, but not the peroxidase activity of the enzyme.

It catalyses the reaction H2O2 + AH2 = A + 2 H2O. It carries out the reaction 2 H2O2 = O2 + 2 H2O. In terms of biological role, bifunctional enzyme with both catalase and broad-spectrum peroxidase activity. The protein is Catalase-peroxidase of Mycobacteroides abscessus (strain ATCC 19977 / DSM 44196 / CCUG 20993 / CIP 104536 / JCM 13569 / NCTC 13031 / TMC 1543 / L948) (Mycobacterium abscessus).